The following is a 391-amino-acid chain: Cathepsin E (391 aa).

An N-terminal signal peptide occupies residues 1-19 (MKTFLLLLLVLLELGQAPG). A propeptide spans 20–53 (ALHRVPLSRRESLRKKLRAQGQLTELWKSQNLNM) (activation peptide). A Peptidase A1 domain is found at 74–387 (YFGTISIGSP…DRGNNRVGLA (314 aa)). Asn86 is a glycosylation site (N-linked (GlcNAc...) asparagine). The active site involves Asp92. Intrachain disulfides connect Cys105–Cys110 and Cys267–Cys271. The active site involves Asp276. Cys309 and Cys346 are joined by a disulfide.

The protein belongs to the peptidase A1 family. Homodimer; disulfide-linked. Post-translationally, glycosylated. The nature of the carbohydrate chain varies between cell types. In terms of tissue distribution, expressed abundantly in the surface and foveolar epithelial cells of the fundic and pyloric stomach mucosa, and at very low levels in the spleen.

Its subcellular location is the endosome. It catalyses the reaction Similar to cathepsin D, but slightly broader specificity.. Functionally, may have a role in immune function. Probably involved in the processing of antigenic peptides during MHC class II-mediated antigen presentation. May play a role in activation-induced lymphocyte depletion in the thymus, and in neuronal degeneration and glial cell activation in the brain. This is Cathepsin E (CTSE) from Cavia porcellus (Guinea pig).